A 436-amino-acid chain; its full sequence is MSDRQQVTNAKGERIAIVAGLRTPFAKQATAFHGVSALDMGKMVVNELLARSELDPKLIEQLVYGQVVQMPAAPNIAREIVLGTGMNVSTDAYSVTRACATSFQSAVNVAESIMTGNIEIGIAGGADSSSVLPIGVSKKLAHALVDLNKARSFGQKLQIFRRLGIKDLLPVPPAVAEYSTGLSMGQTAEQMAKTYNISRADQDALAHRSHTLASETWASGHLRDEVMVAHVPPYKQFIDRDNNIRENSVLESYAKLRPAFDKQHGTVTAANSTPLTDGASAIILMSEGRAKALGYQPIGYIKSYAFSAIDVWQDMLMGPSYATPLALKRAGMELEDLTLIEMHEAFAAQTLANMQMFASKKFAEEKLGRNRAIGEIDMSKFNVLGGSLAYGHPFAATGTRLITQVCRELKRRGGGTGLTTACAAGGLGVAMILEVE.

C99 (acyl-thioester intermediate) is an active-site residue. Residues H392 and C422 each act as proton acceptor in the active site.

This sequence belongs to the thiolase-like superfamily. Thiolase family. In terms of assembly, heterotetramer of two alpha chains (FadJ) and two beta chains (FadI).

It is found in the cytoplasm. The catalysed reaction is an acyl-CoA + acetyl-CoA = a 3-oxoacyl-CoA + CoA. It functions in the pathway lipid metabolism; fatty acid beta-oxidation. Its function is as follows. Catalyzes the final step of fatty acid oxidation in which acetyl-CoA is released and the CoA ester of a fatty acid two carbons shorter is formed. The chain is 3-ketoacyl-CoA thiolase from Shewanella baltica (strain OS185).